A 414-amino-acid chain; its full sequence is MKIYIVGGAVRDELLGVAVKDRDYVVVGATPEQMIAQNYTPVGKDFPVFLHPVTHEEYALARTERKTAPGYKGFVFHTDAGVTLEEDLIRRDLTVNAMAKDADGRIIDPFGGRRDLEQKIFRHVSSAFAEDPVRILRVARFAARFPQFSVAAETNALMQAMVAAGEVDALVPERTWQELARGLMEVQPSRMFAVLRDCGALQRMLPELDALWGVPQPEKYHPEIDTGVHVMMVVDHAAQQNLALPIRCAALFHDLGKGVTPPEMWPRHHGHEMQSAKLVETVCQRLKIPNDCRDLSVMTAREHGNIGRALELRAATIVTLFERCDAFRKPQRFIDMLQASECDHRGRTGFADVPFPQNAYMQKALAAAQTVNGGEIAALMQQRWPDQPARIPEAIHEARVKAVALAINEVKTPG.

2 residues coordinate ATP: G8 and R11. The CTP site is built by G8 and R11. Residues D21 and D23 each coordinate Mg(2+). Residues R91, R137, and R140 each coordinate ATP. CTP-binding residues include R91, R137, and R140. An HD domain is found at 226–327 (TGVHVMMVVD…VTLFERCDAF (102 aa)).

Belongs to the tRNA nucleotidyltransferase/poly(A) polymerase family. Bacterial CCA-adding enzyme type 1 subfamily. Monomer. Can also form homodimers and oligomers. It depends on Mg(2+) as a cofactor. Ni(2+) serves as cofactor.

It carries out the reaction a tRNA precursor + 2 CTP + ATP = a tRNA with a 3' CCA end + 3 diphosphate. It catalyses the reaction a tRNA with a 3' CCA end + 2 CTP + ATP = a tRNA with a 3' CCACCA end + 3 diphosphate. Functionally, catalyzes the addition and repair of the essential 3'-terminal CCA sequence in tRNAs without using a nucleic acid template. Adds these three nucleotides in the order of C, C, and A to the tRNA nucleotide-73, using CTP and ATP as substrates and producing inorganic pyrophosphate. tRNA 3'-terminal CCA addition is required both for tRNA processing and repair. Also involved in tRNA surveillance by mediating tandem CCA addition to generate a CCACCA at the 3' terminus of unstable tRNAs. While stable tRNAs receive only 3'-terminal CCA, unstable tRNAs are marked with CCACCA and rapidly degraded. The polypeptide is Multifunctional CCA protein (Herminiimonas arsenicoxydans).